The following is a 330-amino-acid chain: LIM domain-containing protein pin-2 (330 aa).

5 LIM zinc-binding domains span residues 21–73, 82–132, 144–194, 202–255, and 264–315; these read CERC…CEHD, CAKC…CFLC, CNKC…CPRC, CFDC…CRDD, and CFIC…CKKC.

Expressed in neurons and intestine.

The protein localises to the cytoplasm. Its subcellular location is the nucleus. The protein is LIM domain-containing protein pin-2 (pin-2) of Caenorhabditis elegans.